The primary structure comprises 268 residues: Serine/arginine-rich splicing factor SR30 (268 aa).

RRM domains lie at 7 to 82 (RTIY…IAHG) and 109 to 187 (YRVL…EYES). Positions 186–199 (ESRSVSRSPDDSKS) are enriched in basic and acidic residues. A disordered region spans residues 186 to 268 (ESRSVSRSPD…NSPVSPVISG (83 aa)). A phosphoserine mark is found at S193, S210, S212, S214, S219, S221, S227, S236, S246, S256, and S260. A compositionally biased stretch (low complexity) spans 207–247 (RGPSCSYSSKSRSVSPARSISPRSRPLSRSRSLYSSVSRSQ). Residues 257–268 (RSNSPVSPVISG) show a composition bias toward low complexity.

It belongs to the splicing factor SR family. SR subfamily. Component of the spliceosome. Interacts with SNRNP35, CYP59 and CYP63. Post-translationally, phosphorylated. As to expression, ubiquitous.

The protein resides in the nucleus speckle. It localises to the nucleus. The protein localises to the nucleoplasm. Its subcellular location is the cytoplasm. In terms of biological role, regulatory splicing factor that modulates alternative splicing and gene expression in specific cell types. Autoregulates its own expression. Probably involved in intron recognition and spliceosome assembly. In Arabidopsis thaliana (Mouse-ear cress), this protein is Serine/arginine-rich splicing factor SR30 (SR30).